Here is a 1309-residue protein sequence, read N- to C-terminus: Putative receptor-type tyrosine-protein phosphatase mosPTP-1 (1309 aa).

The first 36 residues, 1–36 (MNSAPRNAGAARSVDRRGFIAACGLLVLLVVRMLGA), serve as a signal peptide directing secretion. The Extracellular segment spans residues 37–572 (ADATRIFDIE…RQVYDDYNLA (536 aa)). Residues Asn60, Asn107, Asn162, Asn257, Asn353, Asn389, Asn455, Asn501, and Asn513 are each glycosylated (N-linked (GlcNAc...) asparagine). 4 consecutive Fibronectin type-III domains span residues 147–244 (PPGR…TLRE), 249–347 (KPVT…DEGV), 350–449 (KPLN…SGPS), and 450–553 (APKV…LQLH). The chain crosses the membrane as a helical span at residues 573 to 593 (VLGGIVFSCFGLLLIVLSFLL). Residues 594-1309 (WKKCFHAAYY…NHLNLDHNQS (716 aa)) are Cytoplasmic-facing. Tyrosine-protein phosphatase domains are found at residues 656 to 921 (FSKE…LVEA) and 944 to 1196 (IDNQ…LSYM). Cys862 functions as the Phosphocysteine intermediate in the catalytic mechanism. The interval 1239–1269 (NSGDGGGNGNDGVPTGNGTNGGLPMSGGGTT) is disordered. Residues 1256 to 1268 (GTNGGLPMSGGGT) are compositionally biased toward gly residues.

This sequence belongs to the protein-tyrosine phosphatase family. Receptor class subfamily. In terms of assembly, interacts with C-type lectin mosGCTL-1; the interaction probably mediates the recruitment of West Nile virus particles in complex with C-type lectin mosGCTL-1 to the cell surface. Interacts with C-type lectin mosGCTL-7; the interaction probably mediates the recruitment of Japanese encephalitis virus particles in complex with C-type lectin mosGCTL-7 to the cell surface. As to expression, salivary gland (at protein level). Hemolymph. Low-level expression in midgut.

It is found in the cell membrane. The catalysed reaction is O-phospho-L-tyrosyl-[protein] + H2O = L-tyrosyl-[protein] + phosphate. Putative protein tyrosine-protein phosphatase. Its function is as follows. (Microbial infection) Facilitates West Nile virus infection in mosquitoes probably via recruiting West Nile virus particles in complex with C-type lectin mosGCTL-1 to the cell surface. In terms of biological role, (Microbial infection) Facilitates Japanese encephalitis virus infection in mosquitoes probably via recruiting Japanese encephalitis virus particles in complex with C-type lectin mosGCTL-7 to the cell surface. The polypeptide is Putative receptor-type tyrosine-protein phosphatase mosPTP-1 (Aedes aegypti (Yellowfever mosquito)).